The primary structure comprises 322 residues: Undecaprenyl-phosphate 4-deoxy-4-formamido-L-arabinose transferase (322 aa).

At 1–235 (MFEIHPVKKV…TCLTTTPLRM (235 aa)) the chain is on the cytoplasmic side. The helical transmembrane segment at 236-256 (LSLLGSIIAIGGFSIAVLLVI) threads the bilayer. The Periplasmic portion of the chain corresponds to 257–269 (LRLTFGPQWAAEG). A helical transmembrane segment spans residues 270-290 (VFMLFAVLFTFIGAQFIGMGL). The Cytoplasmic segment spans residues 291 to 322 (LGEYIGRIYTDVRARPRYFVQQVIRPSSKENE).

This sequence belongs to the glycosyltransferase 2 family.

It localises to the cell inner membrane. It catalyses the reaction UDP-4-deoxy-4-formamido-beta-L-arabinose + di-trans,octa-cis-undecaprenyl phosphate = 4-deoxy-4-formamido-alpha-L-arabinopyranosyl di-trans,octa-cis-undecaprenyl phosphate + UDP. It participates in glycolipid biosynthesis; 4-amino-4-deoxy-alpha-L-arabinose undecaprenyl phosphate biosynthesis; 4-amino-4-deoxy-alpha-L-arabinose undecaprenyl phosphate from UDP-4-deoxy-4-formamido-beta-L-arabinose and undecaprenyl phosphate: step 1/2. Its pathway is bacterial outer membrane biogenesis; lipopolysaccharide biosynthesis. Functionally, catalyzes the transfer of 4-deoxy-4-formamido-L-arabinose from UDP to undecaprenyl phosphate. The modified arabinose is attached to lipid A and is required for resistance to polymyxin and cationic antimicrobial peptides. The protein is Undecaprenyl-phosphate 4-deoxy-4-formamido-L-arabinose transferase of Escherichia coli O7:K1 (strain IAI39 / ExPEC).